Consider the following 479-residue polypeptide: Ribosomal RNA small subunit methyltransferase F (479 aa).

Residues 125–131 (AAAPGSK), E149, D176, and D194 contribute to the S-adenosyl-L-methionine site. The active-site Nucleophile is C247.

The protein belongs to the class I-like SAM-binding methyltransferase superfamily. RsmB/NOP family.

The protein resides in the cytoplasm. It carries out the reaction cytidine(1407) in 16S rRNA + S-adenosyl-L-methionine = 5-methylcytidine(1407) in 16S rRNA + S-adenosyl-L-homocysteine + H(+). Its function is as follows. Specifically methylates the cytosine at position 1407 (m5C1407) of 16S rRNA. This is Ribosomal RNA small subunit methyltransferase F from Salmonella typhi.